The chain runs to 488 residues: Glutamate synthase [NADPH] small chain (488 aa).

In terms of domain architecture, 4Fe-4S ferredoxin-type spans 38–69 (ESLRQQATRCMDCGIPFCHNGCPLGNLIPEWN).

[4Fe-4S] cluster serves as cofactor.

The catalysed reaction is 2 L-glutamate + NADP(+) = L-glutamine + 2-oxoglutarate + NADPH + H(+). Its pathway is amino-acid biosynthesis; L-glutamate biosynthesis via GLT pathway; L-glutamate from 2-oxoglutarate and L-glutamine (NADP(+) route): step 1/1. This chain is Glutamate synthase [NADPH] small chain (gltD), found in Mycobacterium tuberculosis (strain CDC 1551 / Oshkosh).